We begin with the raw amino-acid sequence, 328 residues long: MHTLIERLEKVTNSKELEEVRLNALGKKGVFADKFNQLKNLNGEEKNAFAKEIHHYKQAFEKAFEWKKKAILELELEERLKKEKIDVSLFNAIKTSSSHPLNYTKNKIIEFFTPLGYKLEIGSLVEDDFHNFSALNLPPYHPARDMQDTFYFKDHKLLRTHTSPVQIHTMQEQTPPIKMICLGETFRRDYDLTHTPMFHQIEGLVVDQKGNIRFTHLKGVIEDFLHYFFGGVKLRWRSSFFPFTEPSAEVDISCVFCKQEGCRVCSHTGWLEVLGCGMVNNAVFEAIGYENVSGFAFGMGIERLAMLTCQINDLRSFFETDLRVLESF.

Glutamate 245 provides a ligand contact to Mg(2+).

It belongs to the class-II aminoacyl-tRNA synthetase family. Phe-tRNA synthetase alpha subunit type 1 subfamily. In terms of assembly, tetramer of two alpha and two beta subunits. It depends on Mg(2+) as a cofactor.

It localises to the cytoplasm. It carries out the reaction tRNA(Phe) + L-phenylalanine + ATP = L-phenylalanyl-tRNA(Phe) + AMP + diphosphate + H(+). The chain is Phenylalanine--tRNA ligase alpha subunit from Helicobacter pylori (strain G27).